Reading from the N-terminus, the 68-residue chain is Large ribosomal subunit protein bL31 (68 aa).

Cys16, Cys18, Cys38, and Cys41 together coordinate Zn(2+).

The protein belongs to the bacterial ribosomal protein bL31 family. Type A subfamily. Part of the 50S ribosomal subunit. Requires Zn(2+) as cofactor.

Its function is as follows. Binds the 23S rRNA. In Thiobacillus denitrificans (strain ATCC 25259 / T1), this protein is Large ribosomal subunit protein bL31.